The sequence spans 252 residues: Indole-3-glycerol phosphate synthase (252 aa).

It belongs to the TrpC family.

It carries out the reaction 1-(2-carboxyphenylamino)-1-deoxy-D-ribulose 5-phosphate + H(+) = (1S,2R)-1-C-(indol-3-yl)glycerol 3-phosphate + CO2 + H2O. It participates in amino-acid biosynthesis; L-tryptophan biosynthesis; L-tryptophan from chorismate: step 4/5. This Listeria monocytogenes serovar 1/2a (strain ATCC BAA-679 / EGD-e) protein is Indole-3-glycerol phosphate synthase.